The sequence spans 327 residues: Phenylalanine--tRNA ligase alpha subunit (327 aa).

Position 252 (glutamate 252) interacts with Mg(2+).

Belongs to the class-II aminoacyl-tRNA synthetase family. Phe-tRNA synthetase alpha subunit type 1 subfamily. As to quaternary structure, tetramer of two alpha and two beta subunits. Mg(2+) serves as cofactor.

The protein localises to the cytoplasm. The enzyme catalyses tRNA(Phe) + L-phenylalanine + ATP = L-phenylalanyl-tRNA(Phe) + AMP + diphosphate + H(+). The sequence is that of Phenylalanine--tRNA ligase alpha subunit from Sodalis glossinidius (strain morsitans).